Consider the following 1050-residue polypeptide: MTAQQEVKPQATPALSQILFRRDWENPQITQYNRLEAHPPFYSWRHLDAAQNDTPSPQRQLLNGQWSFSYFTQPESVPDEWVEHDLPEAISMPVPSNWQLHGYDIPIYTNVQYPIPVDPPRVPQNNPTGCYSYNFTLEPDWILSGQTRIIFDGVNSAFYLWCNGRWVGYSQDSRLPAEFDLTPYLKAGNNRIAVLVLRWSDGSYLEDQDMWRMSGIFRDVSLLHKPDIHLRDIHISTHLSPEFSSAHLEVMAAVNIPLLDINNSQVTKAYQIQVQLWLADSLVASLRQPLGTQPIDERGHYTDRTHLSLRVEHPLLWSAEQPALYRTVVSLLDSQQKLIEAEAYDVGFRQVAIHQGLLKINGKAVLIRGVNRHEHHPQTGQAIDEESMLQDIILMKQHNFNAVRCSHYPNHPLWYRLCDRYGLYVVDEANIETHGMQPMRRLADDPQWFSAFSERVTRMVQRDRNHPCIIIWSLGNESGHGATHDALYRWIKTNDPTRPVQYEGGGANTQATDIVCPMYARVDEDQPFPAVPKWAIKKWIGLPNESRPLILCEYAHAMGNSFGGFARYWQAFRQYPRLQGGFVWDWVDQSLTRNDENGQPYWAYGGDFGDSPNDRQFCMNGLVFPDRTPHPCLYEAQCAQQFFQFSLVSTSPLIIKVTSEYLFRNSDNEHLYWRIELAGKSVLEGSFPLDLLPESTQQFSLTERLPAICGPGDLWLNVEVRQVEETPWSPSHHRCAWFQWRLPHSLAVLSRGLSDSATSNNLKLHQDIQHITVTHQQQHWQFNRQTGLLEQWCVGGENRLLTPLRDQFVRAPLDNDIGISETTRIDPNAWVERWKKAGIYQLEQRCLSLHADTLSQAIQISAEYIYEFAQEQLLHTHWLYRFDQQGHMTIDVRVQIATSLPSLARVGMCCQLSDIYENVEWLGLGPHENYPDRQLSAQHSHWSQPLDQMHTPYIFPSENGLRCNTSMLSYGNWQLTGQFHFGISRYSTQQLMAASHQHLLRSEAGTWLNIDGFHMGVGGDDSWSPSVHADNLLTNEIYQYQVCWQYKDSI.

Substrate contacts are provided by Asn-110 and Asp-209. Asp-209 provides a ligand contact to Na(+). Positions 432, 434, and 477 each coordinate Mg(2+). Substrate-binding positions include Glu-477 and 553 to 556; that span reads EYAH. The active-site Proton donor is the Glu-477. The Nucleophile role is filled by Glu-553. Asn-613 serves as a coordination point for Mg(2+). Residues Phe-617 and Asn-620 each contribute to the Na(+) site. Substrate is bound by residues Asn-620 and Trp-1023.

This sequence belongs to the glycosyl hydrolase 2 family. In terms of assembly, homotetramer. Requires Mg(2+) as cofactor. The cofactor is Na(+).

The enzyme catalyses Hydrolysis of terminal non-reducing beta-D-galactose residues in beta-D-galactosides.. The polypeptide is Beta-galactosidase (Yersinia enterocolitica serotype O:8 / biotype 1B (strain NCTC 13174 / 8081)).